An 88-amino-acid polypeptide reads, in one-letter code: Alpha-latrotoxin associated low molecular weight protein 2 (88 aa).

The N-terminal stretch at 1–19 is a signal peptide; that stretch reads MLKLICIVFLVTVLTFVVG. Intrachain disulfides connect Cys30–Cys66, Cys46–Cys62, and Cys49–Cys75.

This sequence belongs to the arthropod CHH/MIH/GIH/VIH hormone family. In terms of tissue distribution, expressed by the venom gland.

Its subcellular location is the secreted. May increase the toxicity of alpha-latrotoxin and/or other venom components. Is non-toxic to mice and to the cockroach Periplaneta americana. The polypeptide is Alpha-latrotoxin associated low molecular weight protein 2 (Latrodectus geometricus (Brown widow spider)).